The primary structure comprises 153 residues: MAL-like protein (153 aa).

The next 4 helical transmembrane spans lie at 22 to 42 (LFLTIPFAFFLPELIFGFLVW), 59 to 79 (VMYVSLTSFLISLMFLLSYLF), 97 to 117 (GTTGILYMSAAVLQVHATIVS), and 131 to 151 (AASFFAFIATLLYILHAFSIY). Residues 22 to 153 (LFLTIPFAFF…ILHAFSIYYH (132 aa)) form the MARVEL domain.

Belongs to the MAL family.

The protein localises to the membrane. The protein is MAL-like protein (MALL) of Homo sapiens (Human).